Reading from the N-terminus, the 406-residue chain is Tryptophan 2,3-dioxygenase (406 aa).

Ser19 carries the phosphoserine modification. Substrate-binding positions include 72–76 and Arg144; that span reads FIITH. His328 is a binding site for heme. Thr342 contacts substrate.

It belongs to the tryptophan 2,3-dioxygenase family. Homotetramer. Dimer of dimers. Heme is required as a cofactor. In terms of tissue distribution, liver.

It carries out the reaction L-tryptophan + O2 = N-formyl-L-kynurenine. Its pathway is amino-acid degradation; L-tryptophan degradation via kynurenine pathway; L-kynurenine from L-tryptophan: step 1/2. Heme-dependent dioxygenase that catalyzes the oxidative cleavage of the L-tryptophan (L-Trp) pyrrole ring and converts L-tryptophan to N-formyl-L-kynurenine. Catalyzes the oxidative cleavage of the indole moiety. This Rattus norvegicus (Rat) protein is Tryptophan 2,3-dioxygenase.